Reading from the N-terminus, the 122-residue chain is Large ribosomal subunit protein uL14 (122 aa).

The protein belongs to the universal ribosomal protein uL14 family. In terms of assembly, part of the 50S ribosomal subunit. Forms a cluster with proteins L3 and L19. In the 70S ribosome, L14 and L19 interact and together make contacts with the 16S rRNA in bridges B5 and B8.

In terms of biological role, binds to 23S rRNA. Forms part of two intersubunit bridges in the 70S ribosome. The protein is Large ribosomal subunit protein uL14 of Francisella tularensis subsp. holarctica (strain LVS).